Reading from the N-terminus, the 443-residue chain is Histidine--tRNA ligase (443 aa).

Over residues 1 to 20 (MTESEKKQQKPQKAKAEKFK) the composition is skewed to basic and acidic residues. The disordered stretch occupies residues 1–21 (MTESEKKQQKPQKAKAEKFKA).

It belongs to the class-II aminoacyl-tRNA synthetase family. Homodimer.

The protein localises to the cytoplasm. The catalysed reaction is tRNA(His) + L-histidine + ATP = L-histidyl-tRNA(His) + AMP + diphosphate + H(+). This Corynebacterium jeikeium (strain K411) protein is Histidine--tRNA ligase.